A 203-amino-acid chain; its full sequence is MHKAPESVLNALVPMVVEQTAKGERSYDIYSRLLKERVIFLVGQVEEHMANLIVAQLLFLESESPDKDIYLYINSPGGSVTAGMAIYDTMQFIKPNVSTVCIGQAASMGAFLLAGGAEGKRHCLPNSRVMIHQPLGGFQGQASDIAIHAQEILGIKNKLNTMLAEHTGQPLEVIERDTDRDNFMSATEAAEYGLVDSVIAKRG.

The active-site Nucleophile is the serine 107. Histidine 132 is a catalytic residue.

This sequence belongs to the peptidase S14 family. As to quaternary structure, fourteen ClpP subunits assemble into 2 heptameric rings which stack back to back to give a disk-like structure with a central cavity, resembling the structure of eukaryotic proteasomes.

The protein localises to the cytoplasm. The enzyme catalyses Hydrolysis of proteins to small peptides in the presence of ATP and magnesium. alpha-casein is the usual test substrate. In the absence of ATP, only oligopeptides shorter than five residues are hydrolyzed (such as succinyl-Leu-Tyr-|-NHMec, and Leu-Tyr-Leu-|-Tyr-Trp, in which cleavage of the -Tyr-|-Leu- and -Tyr-|-Trp bonds also occurs).. In terms of biological role, cleaves peptides in various proteins in a process that requires ATP hydrolysis. Has a chymotrypsin-like activity. Plays a major role in the degradation of misfolded proteins. The polypeptide is ATP-dependent Clp protease proteolytic subunit (Shewanella pealeana (strain ATCC 700345 / ANG-SQ1)).